The primary structure comprises 835 residues: Phenylalanine--tRNA ligase beta subunit (835 aa).

The region spanning 44–160 is the tRNA-binding domain; that stretch reads PETTGPLVFG…SYGEPGEDAR (117 aa). The region spanning 419–494 is the B5 domain; sequence PAMQPITMKV…RLEGLEAIPT (76 aa). D472, D478, E481, and E482 together coordinate Mg(2+). In terms of domain architecture, FDX-ACB spans 741 to 834; it reads SSFPALHQDI…AKEKFNAEMR (94 aa).

This sequence belongs to the phenylalanyl-tRNA synthetase beta subunit family. Type 1 subfamily. In terms of assembly, tetramer of two alpha and two beta subunits. Mg(2+) is required as a cofactor.

The protein resides in the cytoplasm. It carries out the reaction tRNA(Phe) + L-phenylalanine + ATP = L-phenylalanyl-tRNA(Phe) + AMP + diphosphate + H(+). The polypeptide is Phenylalanine--tRNA ligase beta subunit (Corynebacterium glutamicum (strain ATCC 13032 / DSM 20300 / JCM 1318 / BCRC 11384 / CCUG 27702 / LMG 3730 / NBRC 12168 / NCIMB 10025 / NRRL B-2784 / 534)).